Here is a 320-residue protein sequence, read N- to C-terminus: Malate dehydrogenase (320 aa).

Residues 10 to 15 (GAGQIG) and D34 contribute to the NAD(+) site. Substrate is bound by residues R83 and R89. Residues N96 and 119-121 (ITN) each bind NAD(+). The substrate site is built by N121 and R152. Catalysis depends on H176, which acts as the Proton acceptor.

It belongs to the LDH/MDH superfamily. MDH type 3 family.

The enzyme catalyses (S)-malate + NAD(+) = oxaloacetate + NADH + H(+). Its function is as follows. Catalyzes the reversible oxidation of malate to oxaloacetate. The polypeptide is Malate dehydrogenase (Dinoroseobacter shibae (strain DSM 16493 / NCIMB 14021 / DFL 12)).